A 223-amino-acid chain; its full sequence is Phosphoribosylformylglycinamidine synthase subunit PurQ (223 aa).

Residues 3 to 223 (FAVLVFPGSN…MVKSWREQNV (221 aa)) enclose the Glutamine amidotransferase type-1 domain. Catalysis depends on Cys-85, which acts as the Nucleophile. Residues His-193 and Glu-195 contribute to the active site.

As to quaternary structure, part of the FGAM synthase complex composed of 1 PurL, 1 PurQ and 2 PurS subunits.

The protein resides in the cytoplasm. It carries out the reaction N(2)-formyl-N(1)-(5-phospho-beta-D-ribosyl)glycinamide + L-glutamine + ATP + H2O = 2-formamido-N(1)-(5-O-phospho-beta-D-ribosyl)acetamidine + L-glutamate + ADP + phosphate + H(+). The enzyme catalyses L-glutamine + H2O = L-glutamate + NH4(+). It functions in the pathway purine metabolism; IMP biosynthesis via de novo pathway; 5-amino-1-(5-phospho-D-ribosyl)imidazole from N(2)-formyl-N(1)-(5-phospho-D-ribosyl)glycinamide: step 1/2. Its function is as follows. Part of the phosphoribosylformylglycinamidine synthase complex involved in the purines biosynthetic pathway. Catalyzes the ATP-dependent conversion of formylglycinamide ribonucleotide (FGAR) and glutamine to yield formylglycinamidine ribonucleotide (FGAM) and glutamate. The FGAM synthase complex is composed of three subunits. PurQ produces an ammonia molecule by converting glutamine to glutamate. PurL transfers the ammonia molecule to FGAR to form FGAM in an ATP-dependent manner. PurS interacts with PurQ and PurL and is thought to assist in the transfer of the ammonia molecule from PurQ to PurL. The sequence is that of Phosphoribosylformylglycinamidine synthase subunit PurQ from Staphylococcus epidermidis (strain ATCC 35984 / DSM 28319 / BCRC 17069 / CCUG 31568 / BM 3577 / RP62A).